A 156-amino-acid chain; its full sequence is ATP synthase subunit b (156 aa).

The chain crosses the membrane as a helical span at residues 7–27; it reads LIGQTVAFIIFVWFCMKFVWP.

It belongs to the ATPase B chain family. In terms of assembly, F-type ATPases have 2 components, F(1) - the catalytic core - and F(0) - the membrane proton channel. F(1) has five subunits: alpha(3), beta(3), gamma(1), delta(1), epsilon(1). F(0) has three main subunits: a(1), b(2) and c(10-14). The alpha and beta chains form an alternating ring which encloses part of the gamma chain. F(1) is attached to F(0) by a central stalk formed by the gamma and epsilon chains, while a peripheral stalk is formed by the delta and b chains.

The protein localises to the cell inner membrane. Its function is as follows. F(1)F(0) ATP synthase produces ATP from ADP in the presence of a proton or sodium gradient. F-type ATPases consist of two structural domains, F(1) containing the extramembraneous catalytic core and F(0) containing the membrane proton channel, linked together by a central stalk and a peripheral stalk. During catalysis, ATP synthesis in the catalytic domain of F(1) is coupled via a rotary mechanism of the central stalk subunits to proton translocation. Component of the F(0) channel, it forms part of the peripheral stalk, linking F(1) to F(0). The protein is ATP synthase subunit b of Shewanella baltica (strain OS155 / ATCC BAA-1091).